A 532-amino-acid polypeptide reads, in one-letter code: CTP synthase (532 aa).

The interval 1–267 is amidoligase domain; it reads MAKFIFVTGG…QDIIIEQLQL (267 aa). S13 lines the CTP pocket. S13 contacts UTP. Position 14–19 (14–19) interacts with ATP; the sequence is GLGKGI. Y54 contacts L-glutamine. ATP is bound at residue D71. 2 residues coordinate Mg(2+): D71 and E141. Residues 148 to 150, 188 to 193, and K224 contribute to the CTP site; these read DIE and KTKPIQ. UTP contacts are provided by residues 188–193 and K224; that span reads KTKPIQ. The 241-residue stretch at 292-532 folds into the Glutamine amidotransferase type-1 domain; the sequence is EISFVGKYIE…FIKAIVENNK (241 aa). G354 lines the L-glutamine pocket. The active-site Nucleophile; for glutamine hydrolysis is C381. Residues 382–385, E405, and R461 each bind L-glutamine; that span reads LGMQ. Catalysis depends on residues H506 and E508.

This sequence belongs to the CTP synthase family. As to quaternary structure, homotetramer.

The catalysed reaction is UTP + L-glutamine + ATP + H2O = CTP + L-glutamate + ADP + phosphate + 2 H(+). It carries out the reaction L-glutamine + H2O = L-glutamate + NH4(+). The enzyme catalyses UTP + NH4(+) + ATP = CTP + ADP + phosphate + 2 H(+). It participates in pyrimidine metabolism; CTP biosynthesis via de novo pathway; CTP from UDP: step 2/2. Its activity is regulated as follows. Allosterically activated by GTP, when glutamine is the substrate; GTP has no effect on the reaction when ammonia is the substrate. The allosteric effector GTP functions by stabilizing the protein conformation that binds the tetrahedral intermediate(s) formed during glutamine hydrolysis. Inhibited by the product CTP, via allosteric rather than competitive inhibition. Its function is as follows. Catalyzes the ATP-dependent amination of UTP to CTP with either L-glutamine or ammonia as the source of nitrogen. Regulates intracellular CTP levels through interactions with the four ribonucleotide triphosphates. This chain is CTP synthase, found in Mycoplasma mycoides subsp. mycoides SC (strain CCUG 32753 / NCTC 10114 / PG1).